The following is a 320-amino-acid chain: Protein U25 (320 aa).

This sequence belongs to the herpesviridae US22 family.

The protein is Protein U25 (U25) of Human herpesvirus 7 (strain JI) (HHV-7).